The sequence spans 86 residues: Exodeoxyribonuclease 7 small subunit (86 aa).

The protein belongs to the XseB family. In terms of assembly, heterooligomer composed of large and small subunits.

The protein localises to the cytoplasm. It catalyses the reaction Exonucleolytic cleavage in either 5'- to 3'- or 3'- to 5'-direction to yield nucleoside 5'-phosphates.. In terms of biological role, bidirectionally degrades single-stranded DNA into large acid-insoluble oligonucleotides, which are then degraded further into small acid-soluble oligonucleotides. In Xanthomonas euvesicatoria pv. vesicatoria (strain 85-10) (Xanthomonas campestris pv. vesicatoria), this protein is Exodeoxyribonuclease 7 small subunit.